Reading from the N-terminus, the 100-residue chain is Aspartyl/glutamyl-tRNA(Asn/Gln) amidotransferase subunit C (100 aa).

This sequence belongs to the GatC family. In terms of assembly, heterotrimer of A, B and C subunits.

It carries out the reaction L-glutamyl-tRNA(Gln) + L-glutamine + ATP + H2O = L-glutaminyl-tRNA(Gln) + L-glutamate + ADP + phosphate + H(+). It catalyses the reaction L-aspartyl-tRNA(Asn) + L-glutamine + ATP + H2O = L-asparaginyl-tRNA(Asn) + L-glutamate + ADP + phosphate + 2 H(+). Its function is as follows. Allows the formation of correctly charged Asn-tRNA(Asn) or Gln-tRNA(Gln) through the transamidation of misacylated Asp-tRNA(Asn) or Glu-tRNA(Gln) in organisms which lack either or both of asparaginyl-tRNA or glutaminyl-tRNA synthetases. The reaction takes place in the presence of glutamine and ATP through an activated phospho-Asp-tRNA(Asn) or phospho-Glu-tRNA(Gln). This Herminiimonas arsenicoxydans protein is Aspartyl/glutamyl-tRNA(Asn/Gln) amidotransferase subunit C.